The primary structure comprises 503 residues: Lysine--tRNA ligase (503 aa).

2 residues coordinate Mg(2+): Glu412 and Glu419.

Belongs to the class-II aminoacyl-tRNA synthetase family. Homodimer. The cofactor is Mg(2+).

The protein resides in the cytoplasm. It carries out the reaction tRNA(Lys) + L-lysine + ATP = L-lysyl-tRNA(Lys) + AMP + diphosphate. The chain is Lysine--tRNA ligase from Buchnera aphidicola subsp. Schizaphis graminum (strain Sg).